The sequence spans 473 residues: Catalase easC (473 aa).

Over residues 1 to 15 (MASEVSVASSGSEHS) the composition is skewed to low complexity. The disordered stretch occupies residues 1–31 (MASEVSVASSGSEHSGAQKCPFQDPGLSSMD). His-54 is a catalytic residue. Tyr-344 contacts heme. The disordered stretch occupies residues 352–389 (LGPNNLDLPANRTKKLADGSRPEKAEMAPQKVPSQEHA). Residues 366 to 377 (KLADGSRPEKAE) show a composition bias toward basic and acidic residues.

It belongs to the catalase family. Heme is required as a cofactor.

The protein operates within alkaloid biosynthesis; ergot alkaloid biosynthesis. In terms of biological role, catalase; part of the gene cluster that mediates the biosynthesis of fungal ergot alkaloid. DmaW catalyzes the first step of ergot alkaloid biosynthesis by condensing dimethylallyl diphosphate (DMAP) and tryptophan to form 4-dimethylallyl-L-tryptophan. The second step is catalyzed by the methyltransferase easF that methylates 4-dimethylallyl-L-tryptophan in the presence of S-adenosyl-L-methionine, resulting in the formation of 4-dimethylallyl-L-abrine. The catalase easC and the FAD-dependent oxidoreductase easE then transform 4-dimethylallyl-L-abrine to chanoclavine-I which is further oxidized by easD in the presence of NAD(+), resulting in the formation of chanoclavine-I aldehyde. Agroclavine dehydrogenase easG then mediates the conversion of chanoclavine-I aldehyde to agroclavine via a non-enzymatic adduct reaction: the substrate is an iminium intermediate that is formed spontaneously from chanoclavine-I aldehyde in the presence of glutathione. The presence of easA is not required to complete this reaction. Further conversion of agroclavine to paspalic acid is a two-step process involving oxidation of agroclavine to elymoclavine and of elymoclavine to paspalic acid, the second step being performed by the elymoclavine oxidase cloA. Paspalic acid is then further converted to D-lysergic acid. Ergopeptines are assembled from D-lysergic acid and three different amino acids by the D-lysergyl-peptide-synthetases composed each of a monomudular and a trimodular nonribosomal peptide synthetase subunit. LpsB and lpsC encode the monomodular subunits responsible for D-lysergic acid activation and incorporation into the ergopeptine backbone. LpsA1 and A2 subunits encode the trimodular nonribosomal peptide synthetase assembling the tripeptide portion of ergopeptines. LpsA1 is responsible for formation of the major ergopeptine, ergotamine, and lpsA2 for alpha-ergocryptine, the minor ergopeptine of the total alkaloid mixture elaborated by C.purpurea. D-lysergyl-tripeptides are assembled by the nonribosomal peptide synthetases and released as N-(D-lysergyl-aminoacyl)-lactams. Cyclolization of the D-lysergyl-tripeptides is performed by the Fe(2+)/2-ketoglutarate-dependent dioxygenase easH which introduces a hydroxyl group into N-(D-lysergyl-aminoacyl)-lactam at alpha-C of the aminoacyl residue followed by spontaneous condensation with the terminal lactam carbonyl group. The chain is Catalase easC from Claviceps purpurea (strain 20.1) (Ergot fungus).